Consider the following 311-residue polypeptide: Aspartate carbamoyltransferase catalytic subunit (311 aa).

Carbamoyl phosphate is bound by residues Arg-55 and Thr-56. Residue Lys-85 participates in L-aspartate binding. 3 residues coordinate carbamoyl phosphate: Arg-106, His-135, and Gln-138. Residues Arg-168 and Arg-230 each contribute to the L-aspartate site. The carbamoyl phosphate site is built by Leu-268 and Pro-269.

The protein belongs to the aspartate/ornithine carbamoyltransferase superfamily. ATCase family. Heterododecamer (2C3:3R2) of six catalytic PyrB chains organized as two trimers (C3), and six regulatory PyrI chains organized as three dimers (R2).

The catalysed reaction is carbamoyl phosphate + L-aspartate = N-carbamoyl-L-aspartate + phosphate + H(+). Its pathway is pyrimidine metabolism; UMP biosynthesis via de novo pathway; (S)-dihydroorotate from bicarbonate: step 2/3. In terms of biological role, catalyzes the condensation of carbamoyl phosphate and aspartate to form carbamoyl aspartate and inorganic phosphate, the committed step in the de novo pyrimidine nucleotide biosynthesis pathway. This is Aspartate carbamoyltransferase catalytic subunit from Escherichia coli O139:H28 (strain E24377A / ETEC).